The chain runs to 403 residues: Phosphopentomutase (403 aa).

Residues Asp-13, Asp-298, His-303, Asp-339, His-340, and His-351 each coordinate Mn(2+).

Belongs to the phosphopentomutase family. Mn(2+) is required as a cofactor.

It localises to the cytoplasm. The enzyme catalyses 2-deoxy-alpha-D-ribose 1-phosphate = 2-deoxy-D-ribose 5-phosphate. It catalyses the reaction alpha-D-ribose 1-phosphate = D-ribose 5-phosphate. It participates in carbohydrate degradation; 2-deoxy-D-ribose 1-phosphate degradation; D-glyceraldehyde 3-phosphate and acetaldehyde from 2-deoxy-alpha-D-ribose 1-phosphate: step 1/2. In terms of biological role, isomerase that catalyzes the conversion of deoxy-ribose 1-phosphate (dRib-1-P) and ribose 1-phosphate (Rib-1-P) to deoxy-ribose 5-phosphate (dRib-5-P) and ribose 5-phosphate (Rib-5-P), respectively. In Streptococcus thermophilus (strain ATCC BAA-491 / LMD-9), this protein is Phosphopentomutase.